Here is a 272-residue protein sequence, read N- to C-terminus: Putative B3 domain-containing protein Os02g0455900 (272 aa).

Positions 30–134 (GKVLMPSDVS…RFFICCRCTC (105 aa)) form a DNA-binding region, TF-B3. Residues 189-227 (TASLGCAAAQPPQVPPTPTPRRRRRSMMVHPEPPEHTTD) form a disordered region.

The protein localises to the nucleus. The polypeptide is Putative B3 domain-containing protein Os02g0455900 (Oryza sativa subsp. japonica (Rice)).